The chain runs to 313 residues: Ribosomal RNA small subunit methyltransferase H (313 aa).

S-adenosyl-L-methionine is bound by residues 31–33, Asp-51, Phe-77, Asp-95, and Gln-102; that span reads GGH.

The protein belongs to the methyltransferase superfamily. RsmH family.

Its subcellular location is the cytoplasm. The catalysed reaction is cytidine(1402) in 16S rRNA + S-adenosyl-L-methionine = N(4)-methylcytidine(1402) in 16S rRNA + S-adenosyl-L-homocysteine + H(+). Specifically methylates the N4 position of cytidine in position 1402 (C1402) of 16S rRNA. This chain is Ribosomal RNA small subunit methyltransferase H, found in Xylella fastidiosa (strain M23).